The chain runs to 201 residues: Ciliary microtubule inner protein 2C (201 aa).

It belongs to the CIMIP2 family. In terms of assembly, microtubule inner protein component of sperm flagellar doublet microtubules.

The protein resides in the cytoplasm. It localises to the cytoskeleton. Its subcellular location is the cilium axoneme. It is found in the flagellum axoneme. In terms of biological role, microtubule inner protein (MIP) part of the dynein-decorated doublet microtubules (DMTs) in cilia axoneme, which is required for motile cilia beating. Binds to the intra-tubulin interfaces. This is Ciliary microtubule inner protein 2C (CIMIP2C) from Bos taurus (Bovine).